Reading from the N-terminus, the 263-residue chain is Glucosamine-6-phosphate deaminase (263 aa).

Asp-72 (proton acceptor; for enolization step) is an active-site residue. Asp-141 serves as the catalytic For ring-opening step. His-143 serves as the catalytic Proton acceptor; for ring-opening step. Glu-148 serves as the catalytic For ring-opening step.

It belongs to the glucosamine/galactosamine-6-phosphate isomerase family. NagB subfamily.

It carries out the reaction alpha-D-glucosamine 6-phosphate + H2O = beta-D-fructose 6-phosphate + NH4(+). It functions in the pathway amino-sugar metabolism; N-acetylneuraminate degradation; D-fructose 6-phosphate from N-acetylneuraminate: step 5/5. With respect to regulation, allosterically activated by N-acetylglucosamine 6-phosphate (GlcNAc6P). Catalyzes the reversible isomerization-deamination of glucosamine 6-phosphate (GlcN6P) to form fructose 6-phosphate (Fru6P) and ammonium ion. In Porphyromonas gingivalis (strain ATCC BAA-308 / W83), this protein is Glucosamine-6-phosphate deaminase.